The sequence spans 172 residues: Co-chaperone protein HscB (172 aa).

Residues 2–74 (DYFTLFGLPI…LKRAEYMLSL (73 aa)) form the J domain.

It belongs to the HscB family. Interacts with HscA and stimulates its ATPase activity. Interacts with IscU.

Co-chaperone involved in the maturation of iron-sulfur cluster-containing proteins. Seems to help targeting proteins to be folded toward HscA. The protein is Co-chaperone protein HscB of Pectobacterium atrosepticum (strain SCRI 1043 / ATCC BAA-672) (Erwinia carotovora subsp. atroseptica).